A 175-amino-acid chain; its full sequence is uncharacterized protein (175 aa).

The N-terminal stretch at Met1–Ala22 is a signal peptide.

This is an uncharacterized protein from Archaeoglobus fulgidus (strain ATCC 49558 / DSM 4304 / JCM 9628 / NBRC 100126 / VC-16).